The chain runs to 87 residues: Small ribosomal subunit protein bS20 (87 aa).

Residues 1–27 (MANIKSAKKRALQSERRRQHNASRRSM) show a composition bias toward basic residues. The segment at 1 to 31 (MANIKSAKKRALQSERRRQHNASRRSMTRTS) is disordered.

Belongs to the bacterial ribosomal protein bS20 family.

Functionally, binds directly to 16S ribosomal RNA. The polypeptide is Small ribosomal subunit protein bS20 (Pseudoalteromonas atlantica (strain T6c / ATCC BAA-1087)).